The sequence spans 360 residues: SUN domain-containing protein 3 (360 aa).

Positions 1–10 (MSGRPNSRGS) are enriched in polar residues. Residues 1–39 (MSGRPNSRGSSRLFRAPSEDASSGSSGSAVLPQEENPNA) form a disordered region. Residues 1-47 (MSGRPNSRGSSRLFRAPSEDASSGSSGSAVLPQEENPNASGLTRSWK) are Nuclear-facing. A helical transmembrane segment spans residues 48 to 67 (AVMGMVFILTLLLLGFINHM). Topologically, residues 68–360 (KLKEKAFPQK…RVHGTPKDDS (293 aa)) are perinuclear space. The stretch at 103-142 (KEQLELLKKESQTLENNFREILFLIEQIDVLKALLRDMQD) forms a coiled coil. An SUN domain is found at 196-357 (GASVVEAGTS…YRFRVHGTPK (162 aa)).

In terms of assembly, self-associates. Interacts with SYNE1 and SPAG4/SUN4. Proposed to form a spermatogenesis-specific LINC complex with SYNE1 during sperm head formation possibly implicating a SUN domain-based heterotrimer with SPAG4/SUN4 associating with SYNE1.

It localises to the membrane. It is found in the nucleus envelope. Its subcellular location is the nucleus inner membrane. As a probable component of the LINC (LInker of Nucleoskeleton and Cytoskeleton) complex, involved in the connection between the nuclear lamina and the cytoskeleton. The nucleocytoplasmic interactions established by the LINC complex play an important role in the transmission of mechanical forces across the nuclear envelope and in nuclear movement and positioning. May be involved in nuclear remodeling during sperm head formation in spermatogenesis. A probable SUN3:SYNE1 LINC complex may tether spermatid nuclei to posterior cytoskeletal structures such as the manchette. The polypeptide is SUN domain-containing protein 3 (SUN3) (Bos taurus (Bovine)).